The sequence spans 604 residues: Acetylcholinesterase 4 (604 aa).

The signal sequence occupies residues 1 to 23 (MKPKLVFLPFLIFITVFIEESEA). A disulfide bridge connects residues C88 and C115. Residues N96 and N128 are each glycosylated (N-linked (GlcNAc...) asparagine). Catalysis depends on S219, which acts as the Acyl-ester intermediate. The cysteines at positions 273 and 284 are disulfide-linked. N274 and N299 each carry an N-linked (GlcNAc...) asparagine glycan. The Charge relay system role is filled by E347. N400 and N446 each carry an N-linked (GlcNAc...) asparagine glycan. A disulfide bond links C426 and C561. H477 acts as the Charge relay system in catalysis.

This sequence belongs to the type-B carboxylesterase/lipase family.

It is found in the synapse. The protein localises to the secreted. It localises to the cell membrane. The enzyme catalyses acetylcholine + H2O = choline + acetate + H(+). Functionally, rapidly hydrolyzes choline released into the synapse. The sequence is that of Acetylcholinesterase 4 (ace-4) from Caenorhabditis briggsae.